A 42-amino-acid chain; its full sequence is Delta-hexatoxin-Hv1b (42 aa).

Intrachain disulfides connect C1–C15, C8–C20, C14–C31, and C16–C42.

Belongs to the neurotoxin 06 (delta-actx) family. As to expression, expressed by the venom gland.

The protein localises to the secreted. In terms of biological role, lethal neurotoxin. Slows the inactivation of tetrodotoxin-sensitive voltage-gated sodium channels (Nav) by binding to site 3 of the channel, resulting in repetitive firing in autonomic and motor nerve fibers. The sequence is that of Delta-hexatoxin-Hv1b from Hadronyche versuta (Blue mountains funnel-web spider).